The following is a 470-amino-acid chain: Desmin (470 aa).

A head region spans residues 2 to 108 (SQAYSSSQRV…QEFLTTRTNE (107 aa)). Position 7 is a phosphoserine; by CDK1 (Ser-7). Ser-12 carries the phosphoserine; by AURKB modification. Residue Arg-16 is modified to Omega-N-methylarginine. Thr-17 is modified (phosphothreonine; by AURKB and ROCK1). Residue Ser-28 is modified to Phosphoserine; by CDK1. Position 31 is a phosphoserine (Ser-31). Ser-32 is modified (phosphoserine; by CDK1). Asymmetric dimethylarginine; alternate is present on Arg-37. Position 37 is an omega-N-methylarginine; alternate (Arg-37). Ser-45 bears the Phosphoserine mark. Residue Arg-58 is modified to ADP-ribosylarginine. Ser-60 is subject to Phosphoserine; by AURKB. An Omega-N-methylarginine modification is found at Arg-70. Thr-77 is subject to Phosphothreonine; by ROCK1. The residue at position 81 (Ser-81) is a Phosphoserine. Positions 108–416 (EKVELQELND…KLLEGEESRI (309 aa)) constitute an IF rod domain. Residues 109–141 (KVELQELNDRFANYIEKVRFLEQQNAALAAEVN) form a coil 1A region. The linker 1 stretch occupies residues 142–151 (RLKGREPTRV). Positions 152–252 (AEIYEEELRE…HEEEIRELQA (101 aa)) are coil 1B. The segment at 253–268 (QLQEQQVQVEMDMSKP) is linker 12. Positions 268 to 415 (PDLTAALRDI…RKLLEGEESR (148 aa)) are interaction with NEB. Residues 269 to 287 (DLTAALRDIRAQYETIAAK) form a coil 2A region. Residues 288–295 (NISEAEEW) are linker 2. 4 positions are modified to phosphoserine: Ser-290, Ser-358, Ser-361, and Ser-424. The tract at residues 296–412 (YKSKVSDLTQ…ATYRKLLEGE (117 aa)) is coil 2B. The tail stretch occupies residues 413–470 (ESRINLPIQTFSALNFRETSPEQRGSEVHTKKTVMIKTIETRDGEVVSEATQQQHEVL). An interaction with CRYAB region spans residues 438 to 453 (SEVHTKKTVMIKTIET).

The protein belongs to the intermediate filament family. As to quaternary structure, homomer. Interacts with DST. Interacts with MTM1. Interacts with EPPK1; interaction is dependent of higher-order structure of intermediate filament. Interacts with CRYAB. Interacts with NEB (via nebulin repeats 160-164). Interacts (via rod region) with NEBL (via nebulin repeats 1-5). Interacts with ASB2; the interaction targets DES for proteasomal degradation. Interacts with PKP1. Interacts with FLII. In terms of processing, ADP-ribosylation prevents ability to form intermediate filaments. Phosphorylation at Ser-7, Ser-28 and Ser-32 by CDK1 and phosphorylation at Ser-60 by AURKB contribute to efficient separation of desmin intermediate filaments during mitosis. Post-translationally, ubiquitination by a SCF-like complex containing ASB2 leads to proteasomal degradation.

It localises to the cytoplasm. The protein resides in the myofibril. The protein localises to the sarcomere. Its subcellular location is the z line. It is found in the cell membrane. It localises to the sarcolemma. The protein resides in the nucleus. The protein localises to the cell tip. Its subcellular location is the nucleus envelope. Muscle-specific type III intermediate filament essential for proper muscular structure and function. Plays a crucial role in maintaining the structure of sarcomeres, inter-connecting the Z-disks and forming the myofibrils, linking them not only to the sarcolemmal cytoskeleton, but also to the nucleus and mitochondria, thus providing strength for the muscle fiber during activity. In adult striated muscle they form a fibrous network connecting myofibrils to each other and to the plasma membrane from the periphery of the Z-line structures. May act as a sarcomeric microtubule-anchoring protein: specifically associates with detyrosinated tubulin-alpha chains, leading to buckled microtubules and mechanical resistance to contraction. Required for nuclear membrane integrity, via anchoring at the cell tip and nuclear envelope, resulting in maintenance of microtubule-derived intracellular mechanical forces. Contributes to the transcriptional regulation of the NKX2-5 gene in cardiac progenitor cells during a short period of cardiomyogenesis and in cardiac side population stem cells in the adult. Plays a role in maintaining an optimal conformation of nebulette (NEB) on heart muscle sarcomeres to bind and recruit cardiac alpha-actin. The sequence is that of Desmin (DES) from Bos taurus (Bovine).